The following is a 761-amino-acid chain: Prolyl endopeptidase FAP (761 aa).

Residues 1–4 (MKTW) lie on the Cytoplasmic side of the membrane. The helical; Signal-anchor for type II membrane protein transmembrane segment at 5-25 (LKTVFGVTTLAALALVVICIV) threads the bilayer. Residues 26 to 761 (LRPSRVYKPE…FLKQCFSLSD (736 aa)) are Extracellular-facing. 3 N-linked (GlcNAc...) asparagine glycosylation sites follow: N49, N92, and N99. The substrate site is built by E203 and E204. 2 N-linked (GlcNAc...) asparagine glycosylation sites follow: N227 and N314. 3 cysteine pairs are disulfide-bonded: C321-C332, C438-C441, and C448-C466. S624 (charge relay system) is an active-site residue. C643 and C756 form a disulfide bridge. Residue N679 is glycosylated (N-linked (GlcNAc...) asparagine). Active-site charge relay system residues include D702 and H734.

Belongs to the peptidase S9B family. Homodimer; homodimerization is required for activity of both plasma membrane and soluble forms. The monomer is inactive. Heterodimer with DPP4. Interacts with PLAUR; the interaction occurs at the cell surface of invadopodia membranes. Interacts with ITGB1. Interacts with ITGA3. Associates with integrin alpha-3/beta-1; the association occurs in a collagen-dependent manner at the cell surface of invadopodia membranes. N-glycosylated. Post-translationally, the N-terminus may be blocked. Expressed strongly in uterus, pancreas, submaxillary gland and skin, less in lymph node, ovary, skeletal muscle, adrenal and bone marrow. Expressed in reactive stromal fibroblast in epithelial cancers. Expressed in melanocytes but not melanomas (at protein level). Detected in fibroblasts, in placenta, uterus, embryos from day 7-19 and in newborn mice (P1).

The protein resides in the cell surface. It localises to the cell membrane. It is found in the cell projection. The protein localises to the lamellipodium membrane. Its subcellular location is the invadopodium membrane. The protein resides in the ruffle membrane. It localises to the membrane. It is found in the secreted. It catalyses the reaction Hydrolysis of Pro-|-Xaa &gt;&gt; Ala-|-Xaa in oligopeptides.. It carries out the reaction Release of an N-terminal dipeptide, Xaa-Yaa-|-Zaa-, from a polypeptide, preferentially when Yaa is Pro, provided Zaa is neither Pro nor hydroxyproline.. With respect to regulation, gelatinase activity is inhibited by serine-protease inhibitors, such as phenylmethylsulfonyl fluoride (PMSF), 4-(2-aminoethyl)-benzenesulfonyl fluoride hydrochloride (AEBSF), 4-amidino phenylsulfonyl fluoride (APSF) and diisopropyl fluorophosphate (DFP), N-ethylmaleimide (NEM) and phenylmethylsulfonyl fluoride (PMSF). Dipeptidyl peptidase activity is inhibited by 2,2'-azino-bis(3-ethylbenzthiazoline-6-sulfonic acid), diisopropylfluorophosphate (DFP). Prolyl endopeptidase activity is inhibited by the boronic acid peptide Ac-Gly-BoroPro, Ac-Gly-Pro-chloromethyl ketone and Thr-Ser-Gly-chloromethyl ketone. Its function is as follows. Cell surface glycoprotein serine protease that participates in extracellular matrix degradation and involved in many cellular processes including tissue remodeling, fibrosis, wound healing, inflammation and tumor growth. Both plasma membrane and soluble forms exhibit post-proline cleaving endopeptidase activity, with a marked preference for Ala/Ser-Gly-Pro-Ser/Asn/Ala consensus sequences, on substrate such as alpha-2-antiplasmin SERPINF2 and SPRY2. Degrade also gelatin, heat-denatured type I collagen, but not native collagen type I and IV, vibronectin, tenascin, laminin, fibronectin, fibrin or casein. Also has dipeptidyl peptidase activity, exhibiting the ability to hydrolyze the prolyl bond two residues from the N-terminus of synthetic dipeptide substrates provided that the penultimate residue is proline, with a preference for Ala-Pro, Ile-Pro, Gly-Pro, Arg-Pro and Pro-Pro. Natural neuropeptide hormones for dipeptidyl peptidase are the neuropeptide Y (NPY), peptide YY (PYY), substance P (TAC1) and brain natriuretic peptide 32 (NPPB). The plasma membrane form, in association with either DPP4, PLAUR or integrins, is involved in the pericellular proteolysis of the extracellular matrix (ECM), and hence promotes cell adhesion, migration and invasion through the ECM. Plays a role in tissue remodeling during development and wound healing. Participates in the cell invasiveness towards the ECM in malignant melanoma cancers. Enhances tumor growth progression by increasing angiogenesis, collagen fiber degradation and apoptosis and by reducing antitumor response of the immune system. Promotes glioma cell invasion through the brain parenchyma by degrading the proteoglycan brevican. Acts as a tumor suppressor in melanocytic cells through regulation of cell proliferation and survival in a serine protease activity-independent manner. In Mus musculus (Mouse), this protein is Prolyl endopeptidase FAP.